The following is a 391-amino-acid chain: 5-amino-6-(D-ribitylamino)uracil--L-tyrosine 4-hydroxyphenyl transferase (391 aa).

The region spanning 55–302 is the Radical SAM core domain; the sequence is VTYVINRNIN…GAVARIYLGN (248 aa). [4Fe-4S] cluster contacts are provided by Cys-69, Cys-73, and Cys-76.

The protein belongs to the radical SAM superfamily. CofH family. As to quaternary structure, consists of two subunits, CofG and CofH. [4Fe-4S] cluster serves as cofactor.

The catalysed reaction is 5-amino-6-(D-ribitylamino)uracil + L-tyrosine + S-adenosyl-L-methionine = 5-amino-5-(4-hydroxybenzyl)-6-(D-ribitylimino)-5,6-dihydrouracil + 2-iminoacetate + 5'-deoxyadenosine + L-methionine + H(+). Its pathway is cofactor biosynthesis; coenzyme F0 biosynthesis. Its function is as follows. Catalyzes the radical-mediated synthesis of 5-amino-5-(4-hydroxybenzyl)-6-(D-ribitylimino)-5,6-dihydrouracil from 5-amino-6-(D-ribitylamino)uracil and L-tyrosine. The polypeptide is 5-amino-6-(D-ribitylamino)uracil--L-tyrosine 4-hydroxyphenyl transferase (Nostoc sp. (strain PCC 7120 / SAG 25.82 / UTEX 2576)).